A 239-amino-acid polypeptide reads, in one-letter code: THAP domain-containing protein 3 (239 aa).

The THAP-type zinc finger occupies 1–82 (MPKSCAARQC…LKHNAVPTVF (82 aa)). The segment at 84–177 (FQDPTQQVRE…RRTPNKQPSD (94 aa)) is disordered. The residue at position 122 (Ser122) is a Phosphoserine. The short motif at 177 to 180 (DHSY) is the HCFC1-binding motif (HBM) element.

Component of a THAP1/THAP3-HCFC1-OGT complex that contains at least, either THAP1 or THAP3, HCFC1 and OGT. Interacts directly with OGT and HCFC1 (via its HBM). As to expression, highly expressed in heart, skeletal muscle and placenta. Weaker expression in brain, kidney and liver.

Component of a THAP1/THAP3-HCFC1-OGT complex that is required for the regulation of the transcriptional activity of RRM1. In Homo sapiens (Human), this protein is THAP domain-containing protein 3 (THAP3).